A 1147-amino-acid polypeptide reads, in one-letter code: Putative ATP-dependent RNA helicase L377 (1147 aa).

In terms of domain architecture, Helicase ATP-binding spans 108–315 (INPNTPYRGL…VELINYLRPK (208 aa)). Residue 121–128 (WGTGVGKS) coordinates ATP. Residues 264–267 (DEAH) carry the DEAH box motif.

Belongs to the DEAD box helicase family. DEAH subfamily.

Its subcellular location is the virion. The enzyme catalyses ATP + H2O = ADP + phosphate + H(+). This is Putative ATP-dependent RNA helicase L377 from Acanthamoeba polyphaga (Amoeba).